A 211-amino-acid polypeptide reads, in one-letter code: Arginine exporter protein ArgO (211 aa).

Transmembrane regions (helical) follow at residues 1–21 (MISYYFQGFALGVAMILPLGP), 37–57 (LMIALLCALSDLVLISAGIFG), 68–88 (LLALVTWGGVAFLLWYGFGAL), 111–131 (IIATMLAVTWLNPHVYLDTFV), 147–167 (WFALGTISASFLWFFGLALLA), and 179–199 (AQRIINILVGVVMWLIAFQLA).

This sequence belongs to the LysE/ArgO transporter (TC 2.A.75) family.

It localises to the cell inner membrane. It carries out the reaction L-arginine(in) = L-arginine(out). Involved in the export of arginine. Important to control the intracellular level of arginine and the correct balance between arginine and lysine. This chain is Arginine exporter protein ArgO, found in Salmonella paratyphi A (strain ATCC 9150 / SARB42).